We begin with the raw amino-acid sequence, 204 residues long: dITP/XTP pyrophosphatase (204 aa).

Thr-8–Lys-13 lines the substrate pocket. The active-site Proton acceptor is Asp-70. Residue Asp-70 participates in Mg(2+) binding. Substrate-binding positions include Ser-71, Phe-153 to Asp-156, Lys-176, and His-181 to Arg-182.

The protein belongs to the HAM1 NTPase family. In terms of assembly, homodimer. It depends on Mg(2+) as a cofactor.

The catalysed reaction is XTP + H2O = XMP + diphosphate + H(+). It carries out the reaction dITP + H2O = dIMP + diphosphate + H(+). The enzyme catalyses ITP + H2O = IMP + diphosphate + H(+). Its function is as follows. Pyrophosphatase that catalyzes the hydrolysis of nucleoside triphosphates to their monophosphate derivatives, with a high preference for the non-canonical purine nucleotides XTP (xanthosine triphosphate), dITP (deoxyinosine triphosphate) and ITP. Seems to function as a house-cleaning enzyme that removes non-canonical purine nucleotides from the nucleotide pool, thus preventing their incorporation into DNA/RNA and avoiding chromosomal lesions. The sequence is that of dITP/XTP pyrophosphatase from Geobacillus kaustophilus (strain HTA426).